A 169-amino-acid polypeptide reads, in one-letter code: Proepiregulin (169 aa).

Positions 1–29 are cleaved as a signal peptide; that stretch reads MTAGRRMEMLCAGRVPALLLCLGFHLLQA. Positions 30–62 are excised as a propeptide; sequence VLSTTVIPSCIPGESSDNCTALVQTEDNPRVAQ. Asn47 carries N-linked (GlcNAc...) asparagine glycosylation. The Extracellular portion of the chain corresponds to 60–119; it reads VAQVSITKCSSDMNGYCLHGQCIYLVDMSQNYCRCEVGYTGVRCEHFFLTVHQPLSKEYV. Positions 64–104 constitute an EGF-like domain; that stretch reads SITKCSSDMNGYCLHGQCIYLVDMSQNYCRCEVGYTGVRCE. 3 disulfide bridges follow: Cys68–Cys81, Cys76–Cys92, and Cys94–Cys103. A propeptide spans 109 to 169 (removed in mature form); it reads TVHQPLSKEY…TSGDPELPQV (61 aa). Residues 120 to 140 form a helical membrane-spanning segment; the sequence is ALTVILIILFLITVVGSTYYF. The Cytoplasmic segment spans residues 141–169; it reads CRWYRNRKSKEPKKEYERVTSGDPELPQV.

In terms of assembly, interacts with EGFR and ERBB4. In terms of tissue distribution, in normal adults, expressed predominantly in the placenta and peripheral blood leukocytes. High levels were detected in carcinomas of the bladder, lung, kidney and colon.

It is found in the secreted. The protein resides in the extracellular space. Its subcellular location is the cell membrane. Functionally, ligand of the EGF receptor/EGFR and ERBB4. Stimulates EGFR and ERBB4 tyrosine phosphorylation. Contributes to inflammation, wound healing, tissue repair, and oocyte maturation by regulating angiogenesis and vascular remodeling and by stimulating cell proliferation. In Homo sapiens (Human), this protein is Proepiregulin (EREG).